Reading from the N-terminus, the 510-residue chain is Tryptophan 6-hydroxylase fscE (510 aa).

A helical membrane pass occupies residues 11–31 (LLPIEGVIILVFVLSCFSLAI). Cysteine 452 is a binding site for heme.

This sequence belongs to the cytochrome P450 family. It depends on heme as a cofactor.

Its subcellular location is the membrane. It functions in the pathway secondary metabolite biosynthesis. Its function is as follows. Tryptophan 6-hydroxylase; part of the fragmented gene cluster that mediates the biosynthesis of fusarochromene, a tryptophan-derived metabolite closely related to a group of mycotoxins including fusarochromanone. Within the pathway, fscE hydroxalates the first intermediate D-tryptophan to yield 6-hydroxytryptophan. The first step of the pathway is the epimerization of L-tryptophan to D-tryptophan in the presence of the NRPS-like tryptophan epimerase fscC. D-tryptophan is subsequently hydroxylated by the tryptophan 6-hydroxylase fscE to yield 6-hydroxytryptophan. The pyrrole ring undergoes cleavaged by the tryptophan 2,3-dioxygenase fscD and is finally converted to 4-hydroxykyrunenine by the hydrolase fscH. The NRPS-like oxidoreductase fscA reduces the carboxyl group to primary alcohol and the DMATS-type prenyltransferase fscG performs prenylation, followed by the formation of a chromene ring catalyzed by the oxidoreductase fscI, which leads to desacetylfusarochromene. Epoxidation by fscF and rearrangement reactions of chromene double bonds convert compound desacetylfusarochromene to fusarochromanones. Although specific acetyltransferases were not found near the fsc gene cluster, several predicted enzymes containing the N-acetyltransferase superfamily domain are present in the genome of F.equiseti. These predicted enzymes may have the potential to convert desacetylfusarochromene to fusarochromene. The chain is Tryptophan 6-hydroxylase fscE from Fusarium equiseti (Fusarium scirpi).